Consider the following 140-residue polypeptide: Sex-regulated protein janus-B (140 aa).

R42 is a binding site for substrate. H69 serves as the catalytic Proton acceptor. 110–112 (CKT) provides a ligand contact to substrate.

This sequence belongs to the janus family.

In terms of biological role, janA and janB regulate somatic sex differentiation. This chain is Sex-regulated protein janus-B (janB), found in Drosophila pseudoobscura pseudoobscura (Fruit fly).